The sequence spans 561 residues: 7-keto 8-aminopelargonic acid transporter (561 aa).

Topologically, residues 1 to 49 are cytoplasmic; the sequence is MNRVGAVFLFVYERNFFLSIVPDRHRTEIRMSSSERSEVKFDKHFNWWS. The chain crosses the membrane as a helical span at residues 50–70; that stretch reads LLGIAFSLSCSWVGISASMAV. The Extracellular segment spans residues 71–77; the sequence is GIASGGP. A helical transmembrane segment spans residues 78–98; that stretch reads LLIIYGLIIAAFFSLMCGISL. Over 99 to 160 the chain is Cytoplasmic; it reads GDFAAILPNS…NVEVSSKFQK (62 aa). A helical transmembrane segment spans residues 161–181; the sequence is VSSMVVGLLNYFGAIFTTASI. At 182–204 the chain is on the extracellular side; sequence CSSLSMSCIGIHKLLHPDYELKH. A helical membrane pass occupies residues 205 to 225; sequence WHVFVGYECINAVLTLFNIYS. The Cytoplasmic segment spans residues 226 to 230; it reads TPLPY. Residues 231–251 form a helical membrane-spanning segment; that stretch reads ISQFGLYTSLLSFAMTFIICI. Over 252 to 281 the chain is Extracellular; sequence VSRSDNTVDPWPKASNIFGSFDNQTGWNSS. Residues 282 to 302 traverse the membrane as a helical segment; that stretch reads GMAFVVGLVNPIWAFVGIDSA. Over 303 to 321 the chain is Cytoplasmic; that stretch reads THMIDEVGYSKSRFLVPKV. Residues 322 to 342 form a helical membrane-spanning segment; that stretch reads IITTIIVGFVTSFIYCVGLFF. Residues 343-369 are Extracellular-facing; sequence CITDQTAVVESILPIVEIFYQATGNRN. A helical transmembrane segment spans residues 370–390; the sequence is LSVFLQCMCITTGFVSGIASG. Residues 391 to 439 are Cytoplasmic-facing; the sequence is TWQSRILQSFGKSYAPFYKEGSLGNKSLKKLAVLTPGFKSPLYAHFLSQ. The chain crosses the membrane as a helical span at residues 440-460; the sequence is ICVTIIGCIFMGSSTAFNAII. Position 461 (Thr461) is a topological domain, extracellular. The helical transmembrane segment at 462 to 482 threads the bilayer; sequence ACITLLLMSYAVPSFIFLFVI. Topologically, residues 483–507 are cytoplasmic; the sequence is KKEKFIHRIESDVNCVSRPNRRRMS. The chain crosses the membrane as a helical span at residues 508–528; sequence MIPHIICILWTLFCLVFLSFP. At 529 to 540 the chain is on the extracellular side; that stretch reads YTLPVTAGNMNY. A helical transmembrane segment spans residues 541–560; the sequence is TSVVYAVVFCIISIVVFPTC. Position 561 (Ile561) is a topological domain, cytoplasmic.

Belongs to the amino acid-polyamine-organocation (APC) superfamily.

Its subcellular location is the membrane. Its function is as follows. Transport into the cell of 7-keto 8-aminopelargonic acid. In Saccharomyces cerevisiae (strain ATCC 204508 / S288c) (Baker's yeast), this protein is 7-keto 8-aminopelargonic acid transporter (BIO5).